Here is a 284-residue protein sequence, read N- to C-terminus: Deoxyribonuclease-1 (284 aa).

Positions 1–22 (MRAARLMGALLALAGLLQLALS) are cleaved as a signal peptide. Residue N40 is glycosylated (N-linked (GlcNAc...) asparagine). Residue E100 is part of the active site. Residues C123 and C126 are joined by a disulfide bond. N128 is a glycosylation site (N-linked (GlcNAc...) asparagine). The active site involves H156. The cysteines at positions 195 and 231 are disulfide-linked.

This sequence belongs to the DNase I family. Ca(2+) serves as cofactor. Requires Mg(2+) as cofactor.

The protein resides in the secreted. Its subcellular location is the zymogen granule. It is found in the nucleus envelope. It carries out the reaction Endonucleolytic cleavage to 5'-phosphodinucleotide and 5'-phosphooligonucleotide end-products.. Its function is as follows. Serum endocuclease secreted into body fluids by a wide variety of exocrine and endocrine organs. Expressed by non-hematopoietic tissues and preferentially cleaves protein-free DNA. Among other functions, seems to be involved in cell death by apoptosis. Binds specifically to G-actin and blocks actin polymerization. Together with DNASE1L3, plays a key role in degrading neutrophil extracellular traps (NETs). NETs are mainly composed of DNA fibers and are released by neutrophils to bind pathogens during inflammation. Degradation of intravascular NETs by DNASE1 and DNASE1L3 is required to prevent formation of clots that obstruct blood vessels and cause organ damage following inflammation. The polypeptide is Deoxyribonuclease-1 (DNASE1) (Sus scrofa (Pig)).